Reading from the N-terminus, the 240-residue chain is Glutathione S-transferase U9 (240 aa).

Positions 7-86 (NKVILHGSFA…YIDETWSNGP (80 aa)) constitute a GST N-terminal domain. Glutathione contacts are provided by residues 17–18 (SP), 43–44 (NK), 57–58 (KI), and 70–71 (ES). Residues 92–226 (DPYRRSKVRF…EQILEILRAF (135 aa)) form the GST C-terminal domain. Threonine 161 carries the post-translational modification Phosphothreonine.

This sequence belongs to the GST superfamily. Tau family.

It localises to the cytoplasm. Its subcellular location is the cytosol. It catalyses the reaction RX + glutathione = an S-substituted glutathione + a halide anion + H(+). Functionally, may be involved in the conjugation of reduced glutathione to a wide number of exogenous and endogenous hydrophobic electrophiles and have a detoxification role against certain herbicides. The protein is Glutathione S-transferase U9 (GSTU9) of Arabidopsis thaliana (Mouse-ear cress).